We begin with the raw amino-acid sequence, 254 residues long: Fasciclin-like arabinogalactan protein 7 (254 aa).

The N-terminal stretch at 1-22 is a signal peptide; that stretch reads MAKMQLSIFIAVVALIVCSASA. Residues 44–186 enclose the FAS1 domain; sequence NVNLTELLSV…VAVYQVNRVL (143 aa). Asn-46, Asn-78, Asn-104, and Asn-130 each carry an N-linked (GlcNAc...) asparagine glycan. Positions 203 to 233 are disordered; sequence APAPIVSAPSDSPSVADSEGASSPKSSHKNS. The segment covering 206–220 has biased composition (low complexity); it reads PIVSAPSDSPSVADS. Residues 222–233 show a composition bias toward polar residues; it reads GASSPKSSHKNS. Asn-232 carries GPI-anchor amidated asparagine lipidation. Residues 233–254 constitute a propeptide, removed in mature form; it reads SGQKLLLAPISMVISGLVALFL.

It belongs to the fasciclin-like AGP family.

It is found in the cell membrane. Functionally, may be a cell surface adhesion protein. This Arabidopsis thaliana (Mouse-ear cress) protein is Fasciclin-like arabinogalactan protein 7 (FLA7).